The sequence spans 285 residues: Cold sensitive U2 snRNA suppressor 2 (285 aa).

The region spanning 45–130 (TSIYISGLPT…KQIRVERAQF (86 aa)) is the RRM 1 domain. Over residues 135 to 149 (GDNMHGKENDLKEFN) the composition is skewed to basic and acidic residues. Residues 135–154 (GDNMHGKENDLKEFNGPEPP) form a disordered region. At S163 the chain carries Phosphoserine. The RRM 2 domain occupies 183–265 (RTVIFANVFN…QKLLAFISGD (83 aa)). The segment at 265 to 285 (DENTSSTSDKNEDSEVEDDLI) is disordered. Over residues 276–285 (EDSEVEDDLI) the composition is skewed to acidic residues.

Belongs to the HTATSF1 family. In terms of assembly, interacts with PRP11. Associates with the U2 snRNA.

In terms of biological role, U2 snRNP protein which helps to refold U2 into a structure favorable for its binding to SF3b and SF3a prior to spliceosome assembly. Mediates functional interactions between U2 RNA and PRP5. Enforces ATP dependence during formation of the prespliceosome by brokering an interaction between PRP5 and the U2 snRNP that depends on correct U2 RNA structure. This Saccharomyces cerevisiae (strain ATCC 204508 / S288c) (Baker's yeast) protein is Cold sensitive U2 snRNA suppressor 2 (CUS2).